Consider the following 338-residue polypeptide: GTPase Obg (338 aa).

The Obg domain occupies 1–159 (MSFIDEVKIH…RWLRLELKLM (159 aa)). The 172-residue stretch at 160–331 (ADVGLLGMPS…LLDEIARQLW (172 aa)) folds into the OBG-type G domain. GTP-binding positions include 166-173 (GMPSVGKS), 191-195 (FTTLK), 213-216 (DIPG), 283-286 (NKMD), and 312-314 (SAA). Positions 173 and 193 each coordinate Mg(2+).

This sequence belongs to the TRAFAC class OBG-HflX-like GTPase superfamily. OBG GTPase family. Monomer. It depends on Mg(2+) as a cofactor.

It is found in the cytoplasm. Functionally, an essential GTPase which binds GTP, GDP and possibly (p)ppGpp with moderate affinity, with high nucleotide exchange rates and a fairly low GTP hydrolysis rate. Plays a role in control of the cell cycle, stress response, ribosome biogenesis and in those bacteria that undergo differentiation, in morphogenesis control. The sequence is that of GTPase Obg from Geotalea daltonii (strain DSM 22248 / JCM 15807 / FRC-32) (Geobacter daltonii).